A 178-amino-acid chain; its full sequence is Adenine phosphoribosyltransferase (178 aa).

This sequence belongs to the purine/pyrimidine phosphoribosyltransferase family. Homodimer.

Its subcellular location is the cytoplasm. It catalyses the reaction AMP + diphosphate = 5-phospho-alpha-D-ribose 1-diphosphate + adenine. The protein operates within purine metabolism; AMP biosynthesis via salvage pathway; AMP from adenine: step 1/1. In terms of biological role, catalyzes a salvage reaction resulting in the formation of AMP, that is energically less costly than de novo synthesis. This Streptomyces clavuligerus protein is Adenine phosphoribosyltransferase.